The chain runs to 418 residues: Glutamyl-tRNA reductase (418 aa).

Substrate contacts are provided by residues 49–52 (TCNR), S109, 114–116 (EPQ), and Q120. The Nucleophile role is filled by C50. An NADP(+)-binding site is contributed by 189 to 194 (GAGETI).

It belongs to the glutamyl-tRNA reductase family. As to quaternary structure, homodimer.

The catalysed reaction is (S)-4-amino-5-oxopentanoate + tRNA(Glu) + NADP(+) = L-glutamyl-tRNA(Glu) + NADPH + H(+). Its pathway is porphyrin-containing compound metabolism; protoporphyrin-IX biosynthesis; 5-aminolevulinate from L-glutamyl-tRNA(Glu): step 1/2. Its function is as follows. Catalyzes the NADPH-dependent reduction of glutamyl-tRNA(Glu) to glutamate 1-semialdehyde (GSA). The polypeptide is Glutamyl-tRNA reductase (Escherichia fergusonii (strain ATCC 35469 / DSM 13698 / CCUG 18766 / IAM 14443 / JCM 21226 / LMG 7866 / NBRC 102419 / NCTC 12128 / CDC 0568-73)).